The sequence spans 778 residues: Probable dipeptidyl peptidase 4 (778 aa).

The N-terminal stretch at 1-18 (MKTSQFLSLLLLAGIAQA) is a signal peptide. 3 N-linked (GlcNAc...) asparagine glycosylation sites follow: N84, N114, and N222. Residues S616, D693, and H728 each act as charge relay system in the active site.

The protein belongs to the peptidase S9B family.

It localises to the secreted. The catalysed reaction is Release of an N-terminal dipeptide, Xaa-Yaa-|-Zaa-, from a polypeptide, preferentially when Yaa is Pro, provided Zaa is neither Pro nor hydroxyproline.. Functionally, extracellular dipeptidyl-peptidase which removes N-terminal dipeptides sequentially from polypeptides having unsubstituted N-termini provided that the penultimate residue is proline. Contributes to pathogenicity. The protein is Probable dipeptidyl peptidase 4 (DPP4) of Arthroderma benhamiae (strain ATCC MYA-4681 / CBS 112371) (Trichophyton mentagrophytes).